The following is a 468-amino-acid chain: ATP synthase subunit beta (468 aa).

155–162 (GGAGVGKT) lines the ATP pocket.

It belongs to the ATPase alpha/beta chains family. As to quaternary structure, F-type ATPases have 2 components, CF(1) - the catalytic core - and CF(0) - the membrane proton channel. CF(1) has five subunits: alpha(3), beta(3), gamma(1), delta(1), epsilon(1). CF(0) has three main subunits: a(1), b(2) and c(9-12). The alpha and beta chains form an alternating ring which encloses part of the gamma chain. CF(1) is attached to CF(0) by a central stalk formed by the gamma and epsilon chains, while a peripheral stalk is formed by the delta and b chains.

The protein localises to the cell inner membrane. It carries out the reaction ATP + H2O + 4 H(+)(in) = ADP + phosphate + 5 H(+)(out). Functionally, produces ATP from ADP in the presence of a proton gradient across the membrane. The catalytic sites are hosted primarily by the beta subunits. The sequence is that of ATP synthase subunit beta from Leptospira biflexa serovar Patoc (strain Patoc 1 / ATCC 23582 / Paris).